A 57-amino-acid polypeptide reads, in one-letter code: Large ribosomal subunit protein bL32 (57 aa).

The segment covering 1 to 20 (MAVPKKKTSKAKRDQRRATW) has biased composition (basic residues). A disordered region spans residues 1-24 (MAVPKKKTSKAKRDQRRATWRRQA).

It belongs to the bacterial ribosomal protein bL32 family.

In Gloeothece citriformis (strain PCC 7424) (Cyanothece sp. (strain PCC 7424)), this protein is Large ribosomal subunit protein bL32.